The primary structure comprises 249 residues: Orotidine 5'-phosphate decarboxylase (249 aa).

Substrate contacts are provided by residues Asp18, Lys40, 67-76 (DLKYHDIPNT), Thr127, Arg188, Gln197, Gly217, and Arg218. Lys69 serves as the catalytic Proton donor.

It belongs to the OMP decarboxylase family. Type 1 subfamily. As to quaternary structure, homodimer.

The enzyme catalyses orotidine 5'-phosphate + H(+) = UMP + CO2. It functions in the pathway pyrimidine metabolism; UMP biosynthesis via de novo pathway; UMP from orotate: step 2/2. Catalyzes the decarboxylation of orotidine 5'-monophosphate (OMP) to uridine 5'-monophosphate (UMP). The polypeptide is Orotidine 5'-phosphate decarboxylase (Baumannia cicadellinicola subsp. Homalodisca coagulata).